Consider the following 593-residue polypeptide: Autophagy-related protein 22-2 (593 aa).

A helical transmembrane segment spans residues 42–62 (YGVAAEVFAVCGVGSFLPLTL). N90 carries an N-linked (GlcNAc...) asparagine glycan. 3 helical membrane-spanning segments follow: residues 112–132 (SFAM…LVSF), 159–179 (LFML…VIGV), and 181–201 (CLGS…ANDP). The disordered stretch occupies residues 228 to 261 (SWTDEEDTGDHAGPAGSKKAVEPEKASSSTSPEL). 4 consecutive transmembrane segments (helical) span residues 271–291 (GVGL…LLLF), 305–325 (LPLR…TVVC), 377–397 (VVVF…VSGT), and 415–435 (LLSI…PIVA). An N-linked (GlcNAc...) asparagine glycan is attached at N443. The next 4 membrane-spanning stretches (helical) occupy residues 448–468 (LCIA…IPFI), 480–500 (WEIF…ASYC), 525–545 (KGSS…TGSV), and 548–568 (GFIF…LVNA).

Belongs to the ATG22 family.

It localises to the vacuole membrane. In terms of biological role, vacuolar effluxer which mediate the efflux of amino acids resulting from autophagic degradation. The release of autophagic amino acids allows the maintenance of protein synthesis and viability during nitrogen starvation. In Emericella nidulans (strain FGSC A4 / ATCC 38163 / CBS 112.46 / NRRL 194 / M139) (Aspergillus nidulans), this protein is Autophagy-related protein 22-2 (atg22-2).